The chain runs to 214 residues: Threonylcarbamoyl-AMP synthase (214 aa).

One can recognise a YrdC-like domain in the interval 9 to 214; it reads TDSVIQAAHW…GDALTGQIIR (206 aa).

This sequence belongs to the SUA5 family. TsaC subfamily.

It localises to the cytoplasm. The catalysed reaction is L-threonine + hydrogencarbonate + ATP = L-threonylcarbamoyladenylate + diphosphate + H2O. Its function is as follows. Required for the formation of a threonylcarbamoyl group on adenosine at position 37 (t(6)A37) in tRNAs that read codons beginning with adenine. Catalyzes the conversion of L-threonine, HCO(3)(-)/CO(2) and ATP to give threonylcarbamoyl-AMP (TC-AMP) as the acyladenylate intermediate, with the release of diphosphate. This chain is Threonylcarbamoyl-AMP synthase, found in Psychrobacter arcticus (strain DSM 17307 / VKM B-2377 / 273-4).